The following is a 441-amino-acid chain: Damage-control phosphatase ARMT1 (441 aa).

Ala2 carries the post-translational modification N-acetylalanine. N6-acetyllysine is present on Lys40. At Ser102 the chain carries Phosphoserine. Mn(2+)-binding residues include Asp253 and Asn254. Residue 253 to 254 participates in substrate binding; it reads DN. The S-adenosyl-L-methionine site is built by Glu258 and Asp291. Mn(2+) is bound at residue Asp291. Substrate-binding positions include 367 to 371 and Lys404; that span reads DLNYR. The Subfamily III RTxK motif motif lies at 401–404; sequence RTLK.

Belongs to the damage-control phosphatase family. Sugar phosphate phosphatase III subfamily. Requires Mn(2+) as cofactor. Ni(2+) is required as a cofactor. In terms of processing, automethylated.

It carries out the reaction beta-D-fructose 1-phosphate + H2O = D-fructose + phosphate. It catalyses the reaction beta-D-fructose 6-phosphate = dihydroxyacetone + D-glyceraldehyde 3-phosphate. The catalysed reaction is L-glutamyl-[protein] + S-adenosyl-L-methionine = [protein]-L-glutamate 5-O-methyl ester + S-adenosyl-L-homocysteine. Functionally, metal-dependent phosphatase that shows phosphatase activity against several substrates, including fructose-1-phosphate and fructose-6-phosphate. Its preference for fructose-1-phosphate, a strong glycating agent that causes DNA damage rather than a canonical yeast metabolite, suggests a damage-control function in hexose phosphate metabolism. Has also been shown to have O-methyltransferase activity that methylates glutamate residues of target proteins to form gamma-glutamyl methyl ester residues. Possibly methylates PCNA, suggesting it is involved in the DNA damage response. This Macaca fascicularis (Crab-eating macaque) protein is Damage-control phosphatase ARMT1.